Reading from the N-terminus, the 161-residue chain is Allophycocyanin alpha chain (161 aa).

Asparagine 71 is modified (N4-methylasparagine). Cysteine 81 contributes to the (2R,3E)-phycocyanobilin binding site.

This sequence belongs to the phycobiliprotein family. Heterodimer of an alpha and a beta chain. Contains one covalently linked phycocyanobilin chromophore.

It localises to the plastid. The protein localises to the chloroplast thylakoid membrane. Light-harvesting photosynthetic bile pigment-protein from the phycobiliprotein complex. Allophycocyanin has a maximum absorption at approximately 650 nanometers. The sequence is that of Allophycocyanin alpha chain (apcA) from Pyropia haitanensis (Red seaweed).